We begin with the raw amino-acid sequence, 349 residues long: Uroporphyrinogen decarboxylase (349 aa).

Substrate contacts are provided by residues 23 to 27, Asp-71, Tyr-148, Ser-203, and His-317; that span reads RQAGR.

This sequence belongs to the uroporphyrinogen decarboxylase family. In terms of assembly, homodimer.

The protein resides in the cytoplasm. It catalyses the reaction uroporphyrinogen III + 4 H(+) = coproporphyrinogen III + 4 CO2. It functions in the pathway porphyrin-containing compound metabolism; protoporphyrin-IX biosynthesis; coproporphyrinogen-III from 5-aminolevulinate: step 4/4. Catalyzes the decarboxylation of four acetate groups of uroporphyrinogen-III to yield coproporphyrinogen-III. This is Uroporphyrinogen decarboxylase from Sorangium cellulosum (strain So ce56) (Polyangium cellulosum (strain So ce56)).